Consider the following 100-residue polypeptide: MQLTPQEKDKLLIFTAALVAERRKNRGLKLNYPEAVAYISAAILEGARDGNTVSELMSYGTTLLTRDDVMEGIAEMVHEVQVEATFPDGTKLVTVHNPIR.

This sequence belongs to the urease gamma subunit family. As to quaternary structure, heterotrimer of UreA (gamma), UreB (beta) and UreC (alpha) subunits. Three heterotrimers associate to form the active enzyme.

It is found in the cytoplasm. It carries out the reaction urea + 2 H2O + H(+) = hydrogencarbonate + 2 NH4(+). It functions in the pathway nitrogen metabolism; urea degradation; CO(2) and NH(3) from urea (urease route): step 1/1. This Nostoc sp. (strain PCC 7120 / SAG 25.82 / UTEX 2576) protein is Urease subunit gamma.